Consider the following 285-residue polypeptide: Cytosolic Fe-S cluster assembly factor CFD1 (285 aa).

30-37 (GKGGVGKS) provides a ligand contact to ATP. [4Fe-4S] cluster-binding residues include Cys-206 and Cys-209.

It belongs to the Mrp/NBP35 ATP-binding proteins family. NUBP2/CFD1 subfamily. In terms of assembly, heterotetramer of 2 NBP35 and 2 CFD1 chains. [4Fe-4S] cluster is required as a cofactor.

It is found in the cytoplasm. Component of the cytosolic iron-sulfur (Fe/S) protein assembly (CIA) machinery. Required for maturation of extramitochondrial Fe-S proteins. The NBP35-CFD1 heterotetramer forms a Fe-S scaffold complex, mediating the de novo assembly of an Fe-S cluster and its transfer to target apoproteins. Required for biogenesis and export of both ribosomal subunits, which may reflect a role in assembly of the Fe/S clusters in RLI1, a protein which performs rRNA processing and ribosome export. The protein is Cytosolic Fe-S cluster assembly factor CFD1 of Candida glabrata (strain ATCC 2001 / BCRC 20586 / JCM 3761 / NBRC 0622 / NRRL Y-65 / CBS 138) (Yeast).